A 493-amino-acid polypeptide reads, in one-letter code: MNEIIRSDAATLAARIAAKELSSVEATQACLDQIAATDERYHAFLHVAADEALGAAAVVDEAVAAGERLPSPLAGVPLALKDVFTTVDMPTTCGSKILQGWRSPYDATVTTKLRAAGIPILGKTNMDEFAMGSSTENSAYGPTRNPWNVERVPGGSGGGSAAALAAFQAPLAIGSDTGGSIRQPAALTATVGVKPTYGTVSRYGLVACASSLDQGGPCARTVLDTALLHQVIAGHDIRDSTSVDAPVPDVVGAARAGAAGDLKGVRVGVVKQLRGEGYQPGVLASFEAAVEQLTALGAEVSEVDCPHFEYALAAYYLILPSEVSSNLARFDAMRYGLRIGDDGSHSAEEVMALTRAAGFGPEVKRRIMIGTYALSAGYYDAYYNQAQKVRTLIARDLDAAYESVDVVVSPATPTTAFGLGEKVDDPLAMYLFDLCTLPLNLAGHCGMSVPSGLSPDDDLPVGLQIMAPALADDRLYRVGAAYEAARGPLRSAI.

Active-site charge relay system residues include Lys-81 and Ser-156. Ser-180 (acyl-ester intermediate) is an active-site residue.

Belongs to the amidase family. GatA subfamily. Heterotrimer of A, B and C subunits.

It catalyses the reaction L-glutamyl-tRNA(Gln) + L-glutamine + ATP + H2O = L-glutaminyl-tRNA(Gln) + L-glutamate + ADP + phosphate + H(+). In terms of biological role, allows the formation of correctly charged Gln-tRNA(Gln) through the transamidation of misacylated Glu-tRNA(Gln) in organisms which lack glutaminyl-tRNA synthetase. The reaction takes place in the presence of glutamine and ATP through an activated gamma-phospho-Glu-tRNA(Gln). The sequence is that of Glutamyl-tRNA(Gln) amidotransferase subunit A from Mycobacterium avium (strain 104).